Consider the following 378-residue polypeptide: H repeat-associated putative transposase YhhI (378 aa).

Belongs to the transposase 11 family.

In Escherichia coli (strain K12), this protein is H repeat-associated putative transposase YhhI (yhhI).